The following is a 266-amino-acid chain: Phosphate import ATP-binding protein PstB 1 (266 aa).

Positions 18 to 261 (AQTSNLSFYY…PTNQLTEQYV (244 aa)) constitute an ABC transporter domain. ATP is bound at residue 50 to 57 (GPSGCGKT).

It belongs to the ABC transporter superfamily. Phosphate importer (TC 3.A.1.7) family. As to quaternary structure, the complex is composed of two ATP-binding proteins (PstB), two transmembrane proteins (PstC and PstA) and a solute-binding protein (PstS).

The protein resides in the cell inner membrane. It carries out the reaction phosphate(out) + ATP + H2O = ADP + 2 phosphate(in) + H(+). In terms of biological role, part of the ABC transporter complex PstSACB involved in phosphate import. Responsible for energy coupling to the transport system. This Gloeobacter violaceus (strain ATCC 29082 / PCC 7421) protein is Phosphate import ATP-binding protein PstB 1.